Reading from the N-terminus, the 371-residue chain is tRNA-specific 2-thiouridylase MnmA (371 aa).

Residues 22–29 (GLSGGVDS) and M48 contribute to the ATP site. Positions 108-110 (NPD) are interaction with target base in tRNA. The active-site Nucleophile is the C113. A disulfide bond links C113 and C209. G137 contributes to the ATP binding site. Residues 159-161 (KDQ) form an interaction with tRNA region. The Cysteine persulfide intermediate role is filled by C209.

It belongs to the MnmA/TRMU family.

The protein resides in the cytoplasm. The enzyme catalyses S-sulfanyl-L-cysteinyl-[protein] + uridine(34) in tRNA + AH2 + ATP = 2-thiouridine(34) in tRNA + L-cysteinyl-[protein] + A + AMP + diphosphate + H(+). Its function is as follows. Catalyzes the 2-thiolation of uridine at the wobble position (U34) of tRNA, leading to the formation of s(2)U34. The polypeptide is tRNA-specific 2-thiouridylase MnmA (Coxiella burnetii (strain CbuK_Q154) (Coxiella burnetii (strain Q154))).